The chain runs to 83 residues: uncharacterized protein (83 aa).

Residues 58 to 83 form a disordered region; it reads EHGHDDEYDEFSDPNAWVPRRSRDTG.

This is an uncharacterized protein from Mycobacterium tuberculosis (strain CDC 1551 / Oshkosh).